A 295-amino-acid chain; its full sequence is MSNANPYENNNPYAENYEMQEDLNNAPTGHSDGSDDFVAFMNKINSINANLSRYENIINQIDAQHKDLLTQVSEEQEMELRRSLDDYISQATDLQYQLKADIKDAQRDGLHDSNKQAQAENCRQKFLKLIQDYRIIDSNYKEESKEQAKRQYTIIQPEATDEEVEAAINDVNGQQIFSQALLNANRRGEAKTALAEVQARHQELLKLEKTMAELTQLFNDMEELVIEQQENVDVIDKNVEDAQQDVEQGVGHTNKAVKSARKARKNKIRCLIICFIIFAIVVVVVVVPSVVETRK.

Residues 1 to 269 (MSNANPYENN…ARKARKNKIR (269 aa)) are Cytoplasmic-facing. Phosphoserine occurs at positions 31 and 34. Residues 39–100 (AFMNKINSIN…ATDLQYQLKA (62 aa)) adopt a coiled-coil conformation. The t-SNARE coiled-coil homology domain maps to 194–256 (LAEVQARHQE…EQGVGHTNKA (63 aa)). A helical; Anchor for type IV membrane protein membrane pass occupies residues 270-291 (CLIICFIIFAIVVVVVVVPSVV). Residues 292–295 (ETRK) are Extracellular-facing.

The protein belongs to the syntaxin family.

Its subcellular location is the membrane. In terms of biological role, required for vesicle fusion with the plasma membrane. This chain is Protein SSO2 (SSO2), found in Saccharomyces cerevisiae (strain ATCC 204508 / S288c) (Baker's yeast).